We begin with the raw amino-acid sequence, 584 residues long: Myo-inositol transporter 1 (584 aa).

Residues 1 to 81 (MGIHIPYLTS…TSVMITFNQS (81 aa)) are Cytoplasmic-facing. T12 carries the phosphothreonine modification. The segment at 13-42 (SQSNVGDAVGNADSVEFNSEHDSPSKRGKI) is disordered. A phosphoserine mark is found at S26, S31, S35, S37, and S46. Basic and acidic residues predominate over residues 30-42 (NSEHDSPSKRGKI). Residues 82 to 102 (LSPFIITLTFVASISGFMFGY) traverse the membrane as a helical segment. The Extracellular portion of the chain corresponds to 103-129 (DTGYISSALISIGTDLDHKVLTYGEKE). Residues 130–150 (IVTAATSLGALITSIFAGTAA) form a helical membrane-spanning segment. Topologically, residues 151–163 (DIFGRKRCLMGSN) are cytoplasmic. The helical transmembrane segment at 164–184 (LMFVIGAILQVSAHTFWQMAV) threads the bilayer. Over 185–186 (GR) the chain is Extracellular. A helical membrane pass occupies residues 187–207 (LIMGFGVGIGSLIAPLFISEI). Over 208–215 (APKMIRGR) the chain is Cytoplasmic. The chain crosses the membrane as a helical span at residues 216–236 (LTVINSLWLTGGQLVAYGCGA). Topologically, residues 237-246 (GLNYVNNGWR) are extracellular. The helical transmembrane segment at 247–267 (ILVGLSLIPTAVQFTCLCFLP) threads the bilayer. Residues 268 to 349 (DTPRYYVMKG…IGCGLQAIQQ (82 aa)) are Cytoplasmic-facing. Residues 350-370 (FTGWNSLMYFSGTIFETVGFK) traverse the membrane as a helical segment. Residue N371 is glycosylated (N-linked (GlcNAc...) asparagine). Topologically, residues 371–376 (NSSAVS) are extracellular. A helical membrane pass occupies residues 377–397 (IIVSGTNFIFTLVAFFSIDKI). The Cytoplasmic portion of the chain corresponds to 398 to 400 (GRR). The chain crosses the membrane as a helical span at residues 401-421 (TILLIGLPGMTMALVVCSIAF). At 422 to 441 (HFLGIKFDGAVAVVVSSGFS) the chain is on the extracellular side. Residues 442-462 (SWGIVIIVFIIVFAAFYALGI) traverse the membrane as a helical segment. The Cytoplasmic segment spans residues 463 to 486 (GTVPWQQSELFPQNVRGIGTSYAT). A helical transmembrane segment spans residues 487–507 (ATNWAGSLVIASTFLTMLQNI). Residues 508-510 (TPA) lie on the Extracellular side of the membrane. The helical transmembrane segment at 511-531 (GTFAFFAGLSCLSTIFCYFCY) threads the bilayer. The Cytoplasmic segment spans residues 532–584 (PELSGLELEEVQTILKDGFNIKASKALAKKRKQQVARVHELKYEPTQEIIEDI). K573 participates in a covalent cross-link: Glycyl lysine isopeptide (Lys-Gly) (interchain with G-Cter in ubiquitin).

Belongs to the major facilitator superfamily. Sugar transporter (TC 2.A.1.1) family.

Its subcellular location is the cell membrane. The enzyme catalyses myo-inositol(out) + H(+)(out) = myo-inositol(in) + H(+)(in). Major transporter for myo-inositol. This is Myo-inositol transporter 1 (ITR1) from Saccharomyces cerevisiae (strain ATCC 204508 / S288c) (Baker's yeast).